The sequence spans 234 residues: tRNA (guanine-N(1)-)-methyltransferase (234 aa).

S-adenosyl-L-methionine contacts are provided by residues G112 and 132–137 (IGDFIL).

It belongs to the RNA methyltransferase TrmD family. As to quaternary structure, homodimer.

The protein resides in the cytoplasm. The enzyme catalyses guanosine(37) in tRNA + S-adenosyl-L-methionine = N(1)-methylguanosine(37) in tRNA + S-adenosyl-L-homocysteine + H(+). Specifically methylates guanosine-37 in various tRNAs. The sequence is that of tRNA (guanine-N(1)-)-methyltransferase from Campylobacter jejuni subsp. doylei (strain ATCC BAA-1458 / RM4099 / 269.97).